Consider the following 146-residue polypeptide: Large ribosomal subunit protein bL9 (146 aa).

This sequence belongs to the bacterial ribosomal protein bL9 family.

Its function is as follows. Binds to the 23S rRNA. The sequence is that of Large ribosomal subunit protein bL9 from Deinococcus geothermalis (strain DSM 11300 / CIP 105573 / AG-3a).